The chain runs to 301 residues: Oxygen-dependent coproporphyrinogen-III oxidase (301 aa).

Residue serine 90 participates in substrate binding. The a divalent metal cation site is built by histidine 94 and histidine 104. Histidine 104 (proton donor) is an active-site residue. 106-108 contributes to the substrate binding site; the sequence is NVR. The a divalent metal cation site is built by histidine 143 and histidine 173. Positions 238–273 are important for dimerization; the sequence is YVEFNLVWDRGTLFGLQSGGRTESILMSLPPIVKWR. Position 256 to 258 (256 to 258) interacts with substrate; the sequence is GGR.

Belongs to the aerobic coproporphyrinogen-III oxidase family. As to quaternary structure, homodimer. It depends on a divalent metal cation as a cofactor.

It is found in the cytoplasm. The catalysed reaction is coproporphyrinogen III + O2 + 2 H(+) = protoporphyrinogen IX + 2 CO2 + 2 H2O. Its pathway is porphyrin-containing compound metabolism; protoporphyrin-IX biosynthesis; protoporphyrinogen-IX from coproporphyrinogen-III (O2 route): step 1/1. In terms of biological role, involved in the heme biosynthesis. Catalyzes the aerobic oxidative decarboxylation of propionate groups of rings A and B of coproporphyrinogen-III to yield the vinyl groups in protoporphyrinogen-IX. This chain is Oxygen-dependent coproporphyrinogen-III oxidase, found in Nitrosomonas eutropha (strain DSM 101675 / C91 / Nm57).